The chain runs to 488 residues: Probable cytosol aminopeptidase (488 aa).

Residues Lys251 and Asp256 each coordinate Mn(2+). Residue Lys263 is part of the active site. Residues Asp274, Asp333, and Glu335 each contribute to the Mn(2+) site. Residue Arg337 is part of the active site.

It belongs to the peptidase M17 family. It depends on Mn(2+) as a cofactor.

It localises to the cytoplasm. The enzyme catalyses Release of an N-terminal amino acid, Xaa-|-Yaa-, in which Xaa is preferably Leu, but may be other amino acids including Pro although not Arg or Lys, and Yaa may be Pro. Amino acid amides and methyl esters are also readily hydrolyzed, but rates on arylamides are exceedingly low.. It carries out the reaction Release of an N-terminal amino acid, preferentially leucine, but not glutamic or aspartic acids.. In terms of biological role, presumably involved in the processing and regular turnover of intracellular proteins. Catalyzes the removal of unsubstituted N-terminal amino acids from various peptides. The chain is Probable cytosol aminopeptidase from Cenarchaeum symbiosum (strain A).